A 460-amino-acid chain; its full sequence is UDP-N-acetylmuramoylalanine--D-glutamate ligase (460 aa).

An ATP-binding site is contributed by G117–T123.

It belongs to the MurCDEF family.

Its subcellular location is the cytoplasm. The catalysed reaction is UDP-N-acetyl-alpha-D-muramoyl-L-alanine + D-glutamate + ATP = UDP-N-acetyl-alpha-D-muramoyl-L-alanyl-D-glutamate + ADP + phosphate + H(+). It participates in cell wall biogenesis; peptidoglycan biosynthesis. In terms of biological role, cell wall formation. Catalyzes the addition of glutamate to the nucleotide precursor UDP-N-acetylmuramoyl-L-alanine (UMA). The sequence is that of UDP-N-acetylmuramoylalanine--D-glutamate ligase from Prochlorococcus marinus (strain MIT 9313).